Here is a 381-residue protein sequence, read N- to C-terminus: Arogenate dehydratase/prephenate dehydratase 2, chloroplastic (381 aa).

Residues 1 to 32 (MAMHTVRLSPATQLHGGISSNLSPPNRKPNNS) are disordered. The N-terminal 66 residues, 1–66 (MAMHTVRLSP…DANGRDNSVR (66 aa)), are a transit peptide targeting the chloroplast. Polar residues predominate over residues 18 to 32 (ISSNLSPPNRKPNNS). The Prephenate dehydratase domain maps to 100–275 (RVAYQGVRGA…NVTRFLMLAR (176 aa)). Positions 289–375 (SIVFSLEEGP…TFLRVLGSYP (87 aa)) constitute an ACT domain.

Expressed in roots, leaves, stems, flowers and siliques. Most abundant in leaves and seeds.

The protein resides in the plastid. It localises to the chloroplast stroma. It catalyses the reaction L-arogenate + H(+) = L-phenylalanine + CO2 + H2O. The enzyme catalyses prephenate + H(+) = 3-phenylpyruvate + CO2 + H2O. It participates in amino-acid biosynthesis; L-phenylalanine biosynthesis; L-phenylalanine from L-arogenate: step 1/1. It functions in the pathway amino-acid biosynthesis; L-phenylalanine biosynthesis; phenylpyruvate from prephenate: step 1/1. Functionally, converts the prephenate produced from the shikimate-chorismate pathway into phenylalanine. Dehydratase that uses arogenate and prephenate as substrates. Utilzes more efficiently arogenate than prephenate. Required for chloroplast division prior to ARC5, but in an ARC3- and ARC6-dependent manner, especially involved in the Z-ring formation. This Arabidopsis thaliana (Mouse-ear cress) protein is Arogenate dehydratase/prephenate dehydratase 2, chloroplastic.